The following is a 267-amino-acid chain: Thiamine pyrophosphokinase 1 (267 aa).

Belongs to the thiamine pyrophosphokinase family. In terms of tissue distribution, expressed in roots, leaves and flowers.

It localises to the cytoplasm. It is found in the cytosol. The enzyme catalyses thiamine + ATP = thiamine diphosphate + AMP + H(+). It participates in cofactor biosynthesis; thiamine diphosphate biosynthesis; thiamine diphosphate from thiamine: step 1/1. In terms of biological role, catalyzes the phosphorylation of thiamine to thiamine pyrophosphate (TPP). TPP is an active cofactor for enzymes involved in glycolysis and energy production. Plant leaves require high levels of TPP for photosynthesis and carbohydrate metabolism. The protein is Thiamine pyrophosphokinase 1 of Arabidopsis thaliana (Mouse-ear cress).